A 397-amino-acid polypeptide reads, in one-letter code: Serine protease MT3772 (397 aa).

Helical transmembrane passes span 9–29 (IAVL…GALG), 32–52 (LSFG…PHIV), 62–82 (LFAA…AGVV), and 102–122 (VIGV…LAMP). Cys-214 and Cys-395 are joined by a disulfide. Residue His-235 is the Proton acceptor of the active site. The active site involves Asp-264. Ser-343 (charge relay system) is an active-site residue.

The protein belongs to the peptidase S1C family. Monomer.

The protein localises to the membrane. Functionally, required for M.tuberculosis resistance to oxidative stress in addition to its role in resistance to acid, which is essential for virulence. This is Serine protease MT3772 from Mycobacterium tuberculosis (strain CDC 1551 / Oshkosh).